The chain runs to 353 residues: UDP-N-acetylglucosamine--N-acetylmuramyl-(pentapeptide) pyrophosphoryl-undecaprenol N-acetylglucosamine transferase (353 aa).

Residues 10–12 (TGG), N124, S183, and Q283 contribute to the UDP-N-acetyl-alpha-D-glucosamine site.

This sequence belongs to the glycosyltransferase 28 family. MurG subfamily.

The protein resides in the cell inner membrane. It carries out the reaction di-trans,octa-cis-undecaprenyl diphospho-N-acetyl-alpha-D-muramoyl-L-alanyl-D-glutamyl-meso-2,6-diaminopimeloyl-D-alanyl-D-alanine + UDP-N-acetyl-alpha-D-glucosamine = di-trans,octa-cis-undecaprenyl diphospho-[N-acetyl-alpha-D-glucosaminyl-(1-&gt;4)]-N-acetyl-alpha-D-muramoyl-L-alanyl-D-glutamyl-meso-2,6-diaminopimeloyl-D-alanyl-D-alanine + UDP + H(+). The protein operates within cell wall biogenesis; peptidoglycan biosynthesis. Cell wall formation. Catalyzes the transfer of a GlcNAc subunit on undecaprenyl-pyrophosphoryl-MurNAc-pentapeptide (lipid intermediate I) to form undecaprenyl-pyrophosphoryl-MurNAc-(pentapeptide)GlcNAc (lipid intermediate II). The protein is UDP-N-acetylglucosamine--N-acetylmuramyl-(pentapeptide) pyrophosphoryl-undecaprenol N-acetylglucosamine transferase of Helicobacter pylori (strain J99 / ATCC 700824) (Campylobacter pylori J99).